The following is a 544-amino-acid chain: Aspartokinase 2, chloroplastic (544 aa).

The N-terminal 84 residues, 1–84, are a transit peptide targeting the chloroplast; that stretch reads MASLQLYGVK…SSGTGKELTC (84 aa). ATP-binding residues include Lys87, Gly90, and Ser119. Glu203 is a substrate binding site. ACT domains lie at 401 to 479 and 481 to 544; these read IAST…RRSI and SLIG…ETDP.

The protein belongs to the aspartokinase family. In terms of tissue distribution, expressed in stems, leaves, floral organs and young seedlings.

Its subcellular location is the plastid. It localises to the chloroplast. The catalysed reaction is L-aspartate + ATP = 4-phospho-L-aspartate + ADP. It participates in amino-acid biosynthesis; L-lysine biosynthesis via DAP pathway; (S)-tetrahydrodipicolinate from L-aspartate: step 1/4. It functions in the pathway amino-acid biosynthesis; L-methionine biosynthesis via de novo pathway; L-homoserine from L-aspartate: step 1/3. Its pathway is amino-acid biosynthesis; L-threonine biosynthesis; L-threonine from L-aspartate: step 1/5. With respect to regulation, allosterically inhibited by lysine, but not by S-adenosyl-L-methionine (SAM). K(0.5) for lysine in the presence of physiological concentrations of substrates is 12.5 uM. No inhibition by threonine or leucine and no activation or inhibition by alanine, cysteine, isoleucine, serine, valine, methionine, glutamine, asparagine, glutamic acid or arginine. Involved in the first step of essential amino acids lysine, threonine, methionine and isoleucine synthesis via the aspartate-family pathway. This chain is Aspartokinase 2, chloroplastic (AK2), found in Arabidopsis thaliana (Mouse-ear cress).